A 278-amino-acid polypeptide reads, in one-letter code: Large ribosomal subunit protein uL24m (278 aa).

In terms of domain architecture, KOW spans 109-142 (FFPGDLVQVMVGKDKGRQGLVLTISRDSSEVVVD).

The protein belongs to the universal ribosomal protein uL24 family.

It is found in the mitochondrion. The chain is Large ribosomal subunit protein uL24m (mrpl-24) from Caenorhabditis briggsae.